A 488-amino-acid chain; its full sequence is Regulatory protein ViaA (488 aa).

It belongs to the ViaA family. As to quaternary structure, homodimer. Interacts with RavA.

It localises to the cytoplasm. Its function is as follows. Component of the RavA-ViaA chaperone complex, which may act on the membrane to optimize the function of some of the respiratory chains. ViaA stimulates the ATPase activity of RavA. This is Regulatory protein ViaA from Yersinia enterocolitica serotype O:8 / biotype 1B (strain NCTC 13174 / 8081).